We begin with the raw amino-acid sequence, 545 residues long: Chaperonin GroEL (545 aa).

Residues 29–32 (TLGP), Lys50, 86–90 (DGTTT), Gly415, and Asp495 contribute to the ATP site.

It belongs to the chaperonin (HSP60) family. As to quaternary structure, forms a cylinder of 14 subunits composed of two heptameric rings stacked back-to-back. Interacts with the co-chaperonin GroES.

Its subcellular location is the cytoplasm. The enzyme catalyses ATP + H2O + a folded polypeptide = ADP + phosphate + an unfolded polypeptide.. Together with its co-chaperonin GroES, plays an essential role in assisting protein folding. The GroEL-GroES system forms a nano-cage that allows encapsulation of the non-native substrate proteins and provides a physical environment optimized to promote and accelerate protein folding. This is Chaperonin GroEL from Phocaeicola vulgatus (strain ATCC 8482 / DSM 1447 / JCM 5826 / CCUG 4940 / NBRC 14291 / NCTC 11154) (Bacteroides vulgatus).